We begin with the raw amino-acid sequence, 440 residues long: Xylose isomerase (440 aa).

Catalysis depends on residues His101 and Asp104. Mg(2+) is bound by residues Glu232, Glu268, His271, Asp296, Asp307, Asp309, and Asp339.

It belongs to the xylose isomerase family. In terms of assembly, homotetramer. Requires Mg(2+) as cofactor.

The protein localises to the cytoplasm. It carries out the reaction alpha-D-xylose = alpha-D-xylulofuranose. This chain is Xylose isomerase, found in Salmonella dublin (strain CT_02021853).